Here is a 209-residue protein sequence, read N- to C-terminus: Transmembrane 4 L6 family member 19 (209 aa).

The Cytoplasmic segment spans residues 1 to 16 (MVSSPCTQASSRTCSR). The helical transmembrane segment at 17 to 37 (ILGLSLGTAALFAAGANVALL) threads the bilayer. The Extracellular portion of the chain corresponds to 38-59 (LPNWDVTYLLRGLLGRHAMLGT). A helical transmembrane segment spans residues 60–80 (GLWGGGLMVLTAAILISLMGW). Residues 81–93 (RYGCFSKSGLCRS) are Cytoplasmic-facing. The helical transmembrane segment at 94-114 (VLTALLSGGLALLGALICFVT) threads the bilayer. Over 115–175 (SGVALKDGPF…PSAAVVWHVS (61 aa)) the chain is Extracellular. Residue Asn-133 is glycosylated (N-linked (GlcNAc...) asparagine). A helical transmembrane segment spans residues 176 to 196 (LFSALLCISLLQLLLVVVHVI). The segment at 186-196 (LQLLLVVVHVI) is important for homodimerization. The Cytoplasmic segment spans residues 197–209 (NSLLGLFCSLCEK).

This sequence belongs to the L6 tetraspanin family. In terms of assembly, may form homodimers and homooligomers. Interacts with integrins ITGAV and ITGB3. Interacts with components of members of the V0 complex of vacuolar(H+)-ATPase (V-ATPase), including ATP6V0B and ATP6V0D2; this interaction inhibits V1-V0 complex assembly. In adipose tissue, expressed by macrophages.

The protein resides in the lysosome membrane. The protein localises to the cytoplasm. Its subcellular location is the cytoskeleton. It localises to the cell projection. It is found in the filopodium. Functionally, negatively regulates vacuolar (H+)-ATPase (V-ATPase) activity by interacting with members of V-ATPase V0 complex and hence inhibiting V1-V0 complex assembly. Required for multinucleation during osteoclast differentiation. The chain is Transmembrane 4 L6 family member 19 (TM4SF19) from Homo sapiens (Human).